Consider the following 330-residue polypeptide: NADH-quinone oxidoreductase subunit H (330 aa).

Helical transmembrane passes span Ile-11–Leu-31, Phe-81–Ile-101, Ile-114–Gly-134, Ile-154–Phe-174, Leu-187–Val-207, Phe-238–Phe-258, Gln-270–Leu-290, and Phe-309–Ala-329.

Belongs to the complex I subunit 1 family. In terms of assembly, NDH-1 is composed of 13 different subunits. Subunits NuoA, H, J, K, L, M, N constitute the membrane sector of the complex.

It is found in the cell inner membrane. It carries out the reaction a quinone + NADH + 5 H(+)(in) = a quinol + NAD(+) + 4 H(+)(out). Its function is as follows. NDH-1 shuttles electrons from NADH, via FMN and iron-sulfur (Fe-S) centers, to quinones in the respiratory chain. The immediate electron acceptor for the enzyme in this species is believed to be ubiquinone. Couples the redox reaction to proton translocation (for every two electrons transferred, four hydrogen ions are translocated across the cytoplasmic membrane), and thus conserves the redox energy in a proton gradient. This subunit may bind ubiquinone. The sequence is that of NADH-quinone oxidoreductase subunit H from Ectopseudomonas mendocina (strain ymp) (Pseudomonas mendocina).